The sequence spans 162 residues: Caveolin-2 (162 aa).

Residues 1 to 86 (MGLETEKADV…FEISKYVIYK (86 aa)) lie on the Cytoplasmic side of the membrane. A Phosphotyrosine; by SRC modification is found at Y19. A phosphoserine mark is found at S20 and S23. Residue Y27 is modified to Phosphotyrosine; by SRC. A Phosphoserine modification is found at S36. Positions 87 to 107 (FLTFFLAIPMAFAAGILFAIL) form an intramembrane region, helical. The Cytoplasmic segment spans residues 108 to 162 (SCLHIWIIMPFVKTCLMVLPSVQTIWKTITDVVIAPLCTSVGRSFSSISLQLSHD).

The protein belongs to the caveolin family. Monomer or homodimer. Interacts with CAV1; the interaction forms a stable heterooligomeric complex that is required for targeting to lipid rafts and for caveolae formation. Tyrosine phosphorylated forms do not form heterooligomers with the Tyr-19-phosphorylated form existing as a monomer or dimer, and the Tyr-27-form as a monomer only. Interacts (tyrosine phosphorylated form) with the SH2 domain-containing proteins, RASA1, NCK1 and SRC. Interacts (tyrosine phosphorylated form) with INSR, the interaction (Tyr-27-phosphorylated form) is increased on insulin stimulation. Interacts (Tyr-19 phosphorylated form) with MAPK1 (phosphorylated form); the interaction, promoted by insulin, leads to nuclear location and MAPK1 activation. Interacts with STAT3; the interaction is increased on insulin-induced tyrosine phosphorylation leading to STAT activation. In terms of processing, phosphorylated on serine and tyrosine residues. CAV1 promotes phosphorylation on Ser-23 which then targets the complex to the plasma membrane, lipid rafts and caveolae. Phosphorylation on Ser-36 appears to modulate mitosis in endothelial cells. Phosphorylation on both Tyr-19 and Tyr-27 is required for insulin-induced 'Ser-727' phosphorylation of STAT3 and its activation. Phosphorylation on Tyr-19 is required for insulin-induced phosphorylation of MAPK1 and DNA binding of STAT3. Tyrosine phosphorylation is induced by both EGF and insulin (By. similarity).

The protein localises to the nucleus. It localises to the cytoplasm. The protein resides in the golgi apparatus membrane. It is found in the cell membrane. Its subcellular location is the membrane. The protein localises to the caveola. In terms of biological role, may act as a scaffolding protein within caveolar membranes. Interacts directly with G-protein alpha subunits and can functionally regulate their activity. Acts as an accessory protein in conjunction with CAV1 in targeting to lipid rafts and driving caveolae formation. The Ser-36 phosphorylated form has a role in modulating mitosis in endothelial cells. Positive regulator of cellular mitogenesis of the MAPK signaling pathway. Required for the insulin-stimulated nuclear translocation and activation of MAPK1 and STAT3, and the subsequent regulation of cell cycle progression. This Mustela putorius furo (European domestic ferret) protein is Caveolin-2 (CAV2).